The sequence spans 62 residues: Photosystem II reaction center protein Z (62 aa).

The next 2 membrane-spanning stretches (helical) occupy residues 8 to 28 (LVVALIVYSFVLIVAVPITLS) and 41 to 61 (VTASIGWVGMVLLTGVLNSFV).

This sequence belongs to the PsbZ family. As to quaternary structure, PSII is composed of 1 copy each of membrane proteins PsbA, PsbB, PsbC, PsbD, PsbE, PsbF, PsbH, PsbI, PsbJ, PsbK, PsbL, PsbM, PsbT, PsbX, PsbY, PsbZ, Psb30/Ycf12, at least 3 peripheral proteins of the oxygen-evolving complex and a large number of cofactors. It forms dimeric complexes.

It is found in the plastid. The protein resides in the chloroplast thylakoid membrane. May control the interaction of photosystem II (PSII) cores with the light-harvesting antenna, regulates electron flow through the 2 photosystem reaction centers. PSII is a light-driven water plastoquinone oxidoreductase, using light energy to abstract electrons from H(2)O, generating a proton gradient subsequently used for ATP formation. The protein is Photosystem II reaction center protein Z of Cyanidioschyzon merolae (strain NIES-3377 / 10D) (Unicellular red alga).